A 199-amino-acid polypeptide reads, in one-letter code: Recombination protein RecR (199 aa).

Residues 58–73 form a C4-type zinc finger; that stretch reads CSVCTNLTDRDPCRIC. Residues 81 to 176 form the Toprim domain; it reads AVICVVEEPR…KVTRIAHGLP (96 aa).

The protein belongs to the RecR family.

May play a role in DNA repair. It seems to be involved in an RecBC-independent recombinational process of DNA repair. It may act with RecF and RecO. The protein is Recombination protein RecR of Heliobacterium modesticaldum (strain ATCC 51547 / Ice1).